A 1905-amino-acid chain; its full sequence is von Willebrand factor A domain-containing protein 8 (1905 aa).

The transit peptide at 1–45 (MQSRLLLLGAPGGLGDVASRRVRLLLRQVLRGRPGGDQQRLEVRL) directs the protein to the mitochondrion. Positions 1 to 260 (MQSRLLLLGA…PLDPPLRSRF (260 aa)) are interaction with PEX7. 446 to 453 (GGKGCGKT) serves as a coordination point for ATP. The segment covering 1541 to 1560 (ERDSNEDVSDPKHGKEDPDN) has biased composition (basic and acidic residues). A disordered region spans residues 1541–1583 (ERDSNEDVSDPKHGKEDPDNMPHVGGNTWAGGTGGRDTAGLGG). A compositionally biased stretch (gly residues) spans 1568 to 1583 (TWAGGTGGRDTAGLGG). The VWFA domain maps to 1714 to 1896 (RLRLVVDVSG…KKIPQILQQI (183 aa)).

As to quaternary structure, monomer. Interacts with PEX7. Interacts with PEX5 in a PEX7-dependent manner. As to expression, isoform 1 is predominantly expressed in liver, kidney, pancreas, heart, and skeletal muscle (at protein level).

The protein localises to the mitochondrion. Functionally, exhibits ATPase activity in vitro. This chain is von Willebrand factor A domain-containing protein 8 (Vwa8), found in Mus musculus (Mouse).